The primary structure comprises 300 residues: Quinolinate synthase (300 aa).

Iminosuccinate contacts are provided by His-21 and Ser-38. Cys-83 provides a ligand contact to [4Fe-4S] cluster. Residues 109–111 and Ser-126 each bind iminosuccinate; that span reads YVN. Cys-170 serves as a coordination point for [4Fe-4S] cluster. Iminosuccinate is bound by residues 196 to 198 and Thr-213; that span reads HPE. Cys-256 lines the [4Fe-4S] cluster pocket.

It belongs to the quinolinate synthase family. Type 2 subfamily. In terms of assembly, monomer. Homodimer. Requires [4Fe-4S] cluster as cofactor.

It is found in the cytoplasm. The enzyme catalyses iminosuccinate + dihydroxyacetone phosphate = quinolinate + phosphate + 2 H2O + H(+). The protein operates within cofactor biosynthesis; NAD(+) biosynthesis; quinolinate from iminoaspartate: step 1/1. Catalyzes the condensation of iminoaspartate with dihydroxyacetone phosphate to form quinolinate. This Pyrococcus horikoshii (strain ATCC 700860 / DSM 12428 / JCM 9974 / NBRC 100139 / OT-3) protein is Quinolinate synthase.